Here is a 203-residue protein sequence, read N- to C-terminus: uncharacterized protein (203 aa).

This is an uncharacterized protein from Haemophilus influenzae (strain ATCC 51907 / DSM 11121 / KW20 / Rd).